A 378-amino-acid polypeptide reads, in one-letter code: Succinyl-diaminopimelate desuccinylase (378 aa).

Histidine 66 is a Zn(2+) binding site. Aspartate 68 is a catalytic residue. A Zn(2+)-binding site is contributed by aspartate 99. Glutamate 133 acts as the Proton acceptor in catalysis. Zn(2+)-binding residues include glutamate 134, glutamate 162, and histidine 348.

Belongs to the peptidase M20A family. DapE subfamily. In terms of assembly, homodimer. Requires Zn(2+) as cofactor. The cofactor is Co(2+).

It carries out the reaction N-succinyl-(2S,6S)-2,6-diaminopimelate + H2O = (2S,6S)-2,6-diaminopimelate + succinate. It functions in the pathway amino-acid biosynthesis; L-lysine biosynthesis via DAP pathway; LL-2,6-diaminopimelate from (S)-tetrahydrodipicolinate (succinylase route): step 3/3. In terms of biological role, catalyzes the hydrolysis of N-succinyl-L,L-diaminopimelic acid (SDAP), forming succinate and LL-2,6-diaminopimelate (DAP), an intermediate involved in the bacterial biosynthesis of lysine and meso-diaminopimelic acid, an essential component of bacterial cell walls. The protein is Succinyl-diaminopimelate desuccinylase of Halorhodospira halophila (strain DSM 244 / SL1) (Ectothiorhodospira halophila (strain DSM 244 / SL1)).